The chain runs to 358 residues: tRNA-specific 2-thiouridylase MnmA (358 aa).

Residues 8–15 (GLSGGVDS) and leucine 34 contribute to the ATP site. Cysteine 95 acts as the Nucleophile in catalysis. Cysteine 95 and cysteine 194 are oxidised to a cystine. Glycine 120 is an ATP binding site. Residues 144–146 (KDQ) form an interaction with tRNA region. Catalysis depends on cysteine 194, which acts as the Cysteine persulfide intermediate. The segment at 299–300 (RY) is interaction with tRNA.

The protein belongs to the MnmA/TRMU family.

The protein localises to the cytoplasm. It catalyses the reaction S-sulfanyl-L-cysteinyl-[protein] + uridine(34) in tRNA + AH2 + ATP = 2-thiouridine(34) in tRNA + L-cysteinyl-[protein] + A + AMP + diphosphate + H(+). In terms of biological role, catalyzes the 2-thiolation of uridine at the wobble position (U34) of tRNA, leading to the formation of s(2)U34. The protein is tRNA-specific 2-thiouridylase MnmA of Synechocystis sp. (strain ATCC 27184 / PCC 6803 / Kazusa).